The following is a 364-amino-acid chain: FNIP repeat-containing protein DDB_G0277323 (364 aa).

FNIP repeat units follow at residues 57-98 (MNIE…DLKY), 155-198 (YDCL…FGWT), 214-244 (LRVL…FGSS), 245-271 (FNQV…NQPI), and 295-340 (FNQP…FINN).

In Dictyostelium discoideum (Social amoeba), this protein is FNIP repeat-containing protein DDB_G0277323.